Consider the following 434-residue polypeptide: Nuclear receptor subfamily 1 group I member 2 (434 aa).

The nuclear receptor DNA-binding region spans 38-107 (PQICRVCGDK…RLRKCLESGM (70 aa)). 2 consecutive NR C4-type zinc fingers follow at residues 41–61 (CRVC…CEGC) and 77–102 (CPFR…LRKC). The Bipartite nuclear localization signal signature appears at 66–92 (RRAMKRNARLRCPFRKGACEITRKTRR). Residues 108-145 (KKEMIMSDEAVEERRALIKRKKSERTGTQPLGVQGLTE) are hinge. The region spanning 146–433 (EQRMMIRELM…LMQELFGITG (288 aa)) is the NR LBD domain. Hyperforin contacts are provided by residues S247, 285-288 (QLRF), and H407.

The protein belongs to the nuclear hormone receptor family. NR1 subfamily. Heterodimer with RXR. Interacts with NCOA1. Interacts (via domain NR LBD) with CRY1 and CRY2 in a ligand-dependent manner. In terms of tissue distribution, expressed in liver, colon and small intestine.

It is found in the nucleus. Its function is as follows. Nuclear receptor that binds and is activated by variety of endogenous and xenobiotic compounds. Transcription factor that activates the transcription of multiple genes involved in the metabolism and secretion of potentially harmful xenobiotics, drugs and endogenous compounds. Activated by the antibiotic rifampicin and various plant metabolites, such as hyperforin, guggulipid, colupulone, and isoflavones. Response to specific ligands is species-specific. Activated by naturally occurring steroids, such as pregnenolone and progesterone. Binds to a response element in the promoters of the CYP3A4 and ABCB1/MDR1 genes. The chain is Nuclear receptor subfamily 1 group I member 2 (NR1I2) from Homo sapiens (Human).